The following is a 248-amino-acid chain: Probable transcriptional regulatory protein HCH_04926 (248 aa).

It belongs to the TACO1 family.

Its subcellular location is the cytoplasm. In Hahella chejuensis (strain KCTC 2396), this protein is Probable transcriptional regulatory protein HCH_04926.